The chain runs to 325 residues: Replication factor C small subunit (325 aa).

45-52 (GPPGTGKT) serves as a coordination point for ATP.

It belongs to the activator 1 small subunits family. RfcS subfamily. As to quaternary structure, heteromultimer composed of small subunits (RfcS) and large subunits (RfcL).

Part of the RFC clamp loader complex which loads the PCNA sliding clamp onto DNA. The protein is Replication factor C small subunit of Sulfolobus acidocaldarius (strain ATCC 33909 / DSM 639 / JCM 8929 / NBRC 15157 / NCIMB 11770).